Here is a 507-residue protein sequence, read N- to C-terminus: Protein zntA (507 aa).

A signal peptide spans 1-18 (MSIFAYSILAGLAPLLSS). The N-linked (GlcNAc...) asparagine glycan is linked to asparagine 31. A helical membrane pass occupies residues 35-55 (FHILLCISAGLLFAVASLELI). A disordered region spans residues 124–179 (GLNLNNLNQATNLDNNEEDNDNLDNDGENEIENDHDHDHQEDEGGDNDHDHESEEK). Residues 125 to 137 (LNLNNLNQATNLD) show a composition bias toward low complexity. Residues 138–154 (NNEEDNDNLDNDGENEI) are compositionally biased toward acidic residues. The span at 155 to 179 (ENDHDHDHQEDEGGDNDHDHESEEK) shows a compositional bias: basic and acidic residues. The chain crosses the membrane as a helical span at residues 185–205 (IPMYGIGFGFAILIIVESIFS). A disordered region spans residues 209–264 (GGGGGGGHHSHSHGSLSSSSSNDVISDYISNNNSNNINNNDDDNNNNNNNNDDDDD). Low complexity predominate over residues 221–258 (HGSLSSSSSNDVISDYISNNNSNNINNNDDDNNNNNNN). Asparagine 240, asparagine 298, asparagine 328, asparagine 342, and asparagine 351 each carry an N-linked (GlcNAc...) asparagine glycan. The segment at 305-350 (PNIASPVMNKDNNNNDKDKNRNSNKSDIKNSGSINNGNNSGNNNNN) is disordered. The segment covering 317–332 (NNNDKDKNRNSNKSDI) has biased composition (basic and acidic residues). Residues 333–350 (KNSGSINNGNNSGNNNNN) show a composition bias toward low complexity. Helical transmembrane passes span 355–375 (LTIT…VVIS), 388–408 (VALA…SLIL), 422–442 (FFYF…SSFL), 451–471 (GAFV…TAIL), and 486–506 (LFSI…FHGA).

The protein belongs to the ZIP transporter (TC 2.A.5) family.

It is found in the membrane. Functionally, may transport divalent cations. May participate, with dstA, in the regulation of the differentiation of stalk cells during development. The polypeptide is Protein zntA (zntA) (Dictyostelium discoideum (Social amoeba)).